Here is a 946-residue protein sequence, read N- to C-terminus: Protein translocase subunit SecA (946 aa).

Residues Gln-87, 105–109, and Asp-524 contribute to the ATP site; that span reads GEGKT. Disordered regions lie at residues 872 to 892 and 904 to 946; these read PEQPRELPPMEVHKMDPNTGE and PADT…GRYA. A compositionally biased stretch (basic and acidic residues) spans 907-917; sequence TVEKSERDPNR. 4 residues coordinate Zn(2+): Cys-930, Cys-932, Cys-941, and His-942. Positions 936–946 are enriched in basic residues; that stretch reads KKYKHCHGRYA.

This sequence belongs to the SecA family. As to quaternary structure, monomer and homodimer. Part of the essential Sec protein translocation apparatus which comprises SecA, SecYEG and auxiliary proteins SecDF-YajC and YidC. Requires Zn(2+) as cofactor.

Its subcellular location is the cell inner membrane. The protein resides in the cytoplasm. It catalyses the reaction ATP + H2O + cellular proteinSide 1 = ADP + phosphate + cellular proteinSide 2.. Part of the Sec protein translocase complex. Interacts with the SecYEG preprotein conducting channel. Has a central role in coupling the hydrolysis of ATP to the transfer of proteins into and across the cell membrane, serving both as a receptor for the preprotein-SecB complex and as an ATP-driven molecular motor driving the stepwise translocation of polypeptide chains across the membrane. In Rhodopseudomonas palustris (strain BisB5), this protein is Protein translocase subunit SecA.